The sequence spans 180 residues: Cytidylate kinase 2 (180 aa).

ATP is bound at residue 7-15; it reads GKSGCGNTT.

Belongs to the cytidylate kinase family. Type 2 subfamily.

The protein localises to the cytoplasm. The enzyme catalyses CMP + ATP = CDP + ADP. It carries out the reaction dCMP + ATP = dCDP + ADP. This chain is Cytidylate kinase 2 (cmk2), found in Borreliella burgdorferi (strain ATCC 35210 / DSM 4680 / CIP 102532 / B31) (Borrelia burgdorferi).